A 671-amino-acid polypeptide reads, in one-letter code: Pescadillo homolog (671 aa).

Coiled coils occupy residues 294–323 and 548–584; these read NQAQAKAVKEAESKRSLMEEELHKVRELFR and QALRKAQEKSRQTETSEARLQRKMSEVKRQEAATRKM. In terms of domain architecture, BRCT spans 317–403; that stretch reads KVRELFRGLT…LVLPVTGYRI (87 aa). Disordered stretches follow at residues 552–577 and 634–671; these read KAQEKSRQTETSEARLQRKMSEVKRQ and GLVNKRLEARRQRAEAKGKKLKERKAGNPYKKLPKWVQ. A compositionally biased stretch (basic and acidic residues) spans 634–651; it reads GLVNKRLEARRQRAEAKG.

The protein belongs to the pescadillo family.

The protein localises to the nucleus. It localises to the nucleolus. It is found in the nucleoplasm. Its function is as follows. Required for maturation of ribosomal RNAs and formation of the large ribosomal subunit. This is Pescadillo homolog from Leishmania major.